The chain runs to 314 residues: MSVGADRKKTGTSLTGKVVAAYGRHFEVEVAGGTIYSCVVRGKKKGVVCGDEVEILPATGDQGIIETTLPRTSLFYRSEIFREKLIAANATQLVFVLAVVPSCNLELLDRCLVAAESQGIRPLILLNKIDLIGQDEQRQAVAHHLMFYRELGYPVLEISAKISVQPLIPLLSGQTSLLAGQSGVGKSTLLNALVPRAQQATAEISDALDSGRHTTTHVRLFHFDADSSIIDSPGFQEFGLQQLDEASLARGFIEFRPFLGQCKFRDCRHIAEPGCKLLLAAQEGMLNSRRIACYHKLVKGLKKSHPWMETNKRV.

In terms of domain architecture, CP-type G spans 78-238; it reads SEIFREKLIA…IIDSPGFQEF (161 aa). Residues 127–130 and 180–188 contribute to the GTP site; these read NKID and GQSGVGKST. Zn(2+) is bound by residues Cys262, Cys267, His269, and Cys275.

It belongs to the TRAFAC class YlqF/YawG GTPase family. RsgA subfamily. Monomer. Associates with 30S ribosomal subunit, binds 16S rRNA. Zn(2+) serves as cofactor.

Its subcellular location is the cytoplasm. One of several proteins that assist in the late maturation steps of the functional core of the 30S ribosomal subunit. Helps release RbfA from mature subunits. May play a role in the assembly of ribosomal proteins into the subunit. Circularly permuted GTPase that catalyzes slow GTP hydrolysis, GTPase activity is stimulated by the 30S ribosomal subunit. The polypeptide is Small ribosomal subunit biogenesis GTPase RsgA (Nitrosomonas europaea (strain ATCC 19718 / CIP 103999 / KCTC 2705 / NBRC 14298)).